The following is a 501-amino-acid chain: MEALLQLKGIDKAFPGVKALSGAALNVYPGRVMALVGENGAGKSTMMKVLTGIYTRDAGTLLWLGKETTFTGPKSSQEAGIGIIHQELNLIPQLTIAENIFLGREFVNRFGKIDWKTMYAEADKLLAKLNLRFKSDKLVGDLSIGDQQMVEIAKVLSFESKVIIMDEPTDALTDTETESLFRVIRELKSQGRGIVYISHRMKEIFEICDDVTVFRDGQFIAEREVASLTEDSLIEMMVGRKLEDQYPHLDKAPGDIRLKVDNLCGPGVNDVSFTLRKGEILGVSGLMGAGRTELMKVLYGALPRTSGYVTLDGHEVVTRSPQDGLANGIVYISEDRKRDGLVLGMSVKENMSLTALRYFSRAGGSLKHADEQQAVSDFIRLFNVKTPSMEQAIGLLSGGNQQKVAIARGLMTRPKVLILDEPTRGVDVGAKKEIYQLINQFKADGLSIILVSSEMPEVLGMSDRIIVMHEGHLSGEFTREQATQEVLMAAAVGKLNRVNQE.

ABC transporter domains follow at residues 5-241 (LQLK…VGRK) and 252-495 (APGD…VGKL). 37–44 (GENGAGKS) contacts ATP.

The protein belongs to the ABC transporter superfamily. Ribose importer (TC 3.A.1.2.1) family. The complex is composed of an ATP-binding protein (RbsA), two transmembrane proteins (RbsC) and a solute-binding protein (RbsB).

It localises to the cell inner membrane. The catalysed reaction is D-ribose(out) + ATP + H2O = D-ribose(in) + ADP + phosphate + H(+). Its function is as follows. Part of the ABC transporter complex RbsABC involved in ribose import. Responsible for energy coupling to the transport system. This is Ribose import ATP-binding protein RbsA from Escherichia coli (strain K12).